The chain runs to 455 residues: Argininosuccinate lyase (455 aa).

This sequence belongs to the lyase 1 family. Argininosuccinate lyase subfamily.

Its subcellular location is the cytoplasm. It carries out the reaction 2-(N(omega)-L-arginino)succinate = fumarate + L-arginine. It functions in the pathway amino-acid biosynthesis; L-arginine biosynthesis; L-arginine from L-ornithine and carbamoyl phosphate: step 3/3. This chain is Argininosuccinate lyase, found in Caulobacter vibrioides (strain ATCC 19089 / CIP 103742 / CB 15) (Caulobacter crescentus).